The following is a 642-amino-acid chain: Threonine--tRNA ligase (642 aa).

The TGS domain maps to 1–61; that stretch reads MPVITLPDGS…ESDAQLAIIT (61 aa). The segment at 243-534 is catalytic; the sequence is DHRKIGKQLD…LTEEYAGFFP (292 aa). Cys334, His385, and His511 together coordinate Zn(2+).

Belongs to the class-II aminoacyl-tRNA synthetase family. As to quaternary structure, homodimer. It depends on Zn(2+) as a cofactor.

The protein localises to the cytoplasm. It catalyses the reaction tRNA(Thr) + L-threonine + ATP = L-threonyl-tRNA(Thr) + AMP + diphosphate + H(+). Functionally, catalyzes the attachment of threonine to tRNA(Thr) in a two-step reaction: L-threonine is first activated by ATP to form Thr-AMP and then transferred to the acceptor end of tRNA(Thr). Also edits incorrectly charged L-seryl-tRNA(Thr). The polypeptide is Threonine--tRNA ligase (Yersinia enterocolitica serotype O:8 / biotype 1B (strain NCTC 13174 / 8081)).